The primary structure comprises 453 residues: tRNA-2-methylthio-N(6)-dimethylallyladenosine synthase (453 aa).

Positions 21–137 constitute an MTTase N-terminal domain; sequence RGVYISTYGC…LPQLVAKSFA (117 aa). Residues Cys-30, Cys-66, Cys-100, Cys-174, Cys-178, and Cys-181 each coordinate [4Fe-4S] cluster. One can recognise a Radical SAM core domain in the interval 160-389; it reads RNPGVATYVN…FDVHEAMAFE (230 aa). Residues 392-453 form the TRAM domain; the sequence is KRYEGTTMKV…FPAVFRGEMI (62 aa).

This sequence belongs to the methylthiotransferase family. MiaB subfamily. In terms of assembly, monomer. [4Fe-4S] cluster is required as a cofactor.

Its subcellular location is the cytoplasm. The catalysed reaction is N(6)-dimethylallyladenosine(37) in tRNA + (sulfur carrier)-SH + AH2 + 2 S-adenosyl-L-methionine = 2-methylsulfanyl-N(6)-dimethylallyladenosine(37) in tRNA + (sulfur carrier)-H + 5'-deoxyadenosine + L-methionine + A + S-adenosyl-L-homocysteine + 2 H(+). Functionally, catalyzes the methylthiolation of N6-(dimethylallyl)adenosine (i(6)A), leading to the formation of 2-methylthio-N6-(dimethylallyl)adenosine (ms(2)i(6)A) at position 37 in tRNAs that read codons beginning with uridine. The polypeptide is tRNA-2-methylthio-N(6)-dimethylallyladenosine synthase (Bdellovibrio bacteriovorus (strain ATCC 15356 / DSM 50701 / NCIMB 9529 / HD100)).